The following is a 95-amino-acid chain: Protein TusB (95 aa).

This sequence belongs to the DsrH/TusB family. In terms of assembly, heterohexamer, formed by a dimer of trimers. The hexameric TusBCD complex contains 2 copies each of TusB, TusC and TusD. The TusBCD complex interacts with TusE.

It is found in the cytoplasm. Part of a sulfur-relay system required for 2-thiolation of 5-methylaminomethyl-2-thiouridine (mnm(5)s(2)U) at tRNA wobble positions. This is Protein TusB from Pectobacterium atrosepticum (strain SCRI 1043 / ATCC BAA-672) (Erwinia carotovora subsp. atroseptica).